The following is a 276-amino-acid chain: Odontogenic ameloblast-associated protein (276 aa).

An N-terminal signal peptide occupies residues 1 to 15 (MRTLILLGILGATMS). 3 O-linked (GalNAc...) threonine glycosylation sites follow: Thr-101, Thr-113, and Thr-117. Residues 125-127 (MPS) are interaction with ARHGEF5. Ser-246 carries an O-linked (GalNAc...) serine glycan. O-linked (GalNAc...) threonine glycosylation is found at Thr-247, Thr-248, and Thr-252. An O-linked (GalNAc...) serine glycan is attached at Ser-253. Thr-254, Thr-258, Thr-260, and Thr-270 each carry an O-linked (GalNAc...) threonine glycan. Ser-272 carries O-linked (GalNAc...) serine glycosylation.

This sequence belongs to the ODAM family. Interacts (via C-terminus) with ARHGEF5. In terms of processing, O-glycosylated.

It localises to the secreted. It is found in the cytoplasm. The protein resides in the nucleus. Tooth-associated epithelia protein that probably plays a role in odontogenesis, the complex process that results in the initiation and generation of the tooth. May be incorporated in the enamel matrix at the end of mineralization process. Involved in the induction of RHOA activity via interaction with ARHGEF and expression of downstream factors such as ROCK. Plays a role in attachment of the junctional epithelium to the tooth surface. This is Odontogenic ameloblast-associated protein (ODAM) from Sus scrofa (Pig).